A 453-amino-acid polypeptide reads, in one-letter code: Obtusifoliol 14-alpha demethylase (453 aa).

Residue Cys-395 coordinates heme.

Belongs to the cytochrome P450 family. Heme is required as a cofactor.

It is found in the membrane. It carries out the reaction a 14alpha-methyl steroid + 3 reduced [NADPH--hemoprotein reductase] + 3 O2 = a Delta(14) steroid + formate + 3 oxidized [NADPH--hemoprotein reductase] + 4 H2O + 4 H(+). The protein operates within steroid biosynthesis; zymosterol biosynthesis; zymosterol from lanosterol: step 1/6. Catalyzes the 14-alpha demethylation of obtusifoliol to 4 alpha-methyl-5 alpha-ergosta-8,14,24(28)-trien-3 beta-ol. The polypeptide is Obtusifoliol 14-alpha demethylase (CYP51) (Triticum aestivum (Wheat)).